A 1485-amino-acid chain; its full sequence is Cystic fibrosis transmembrane conductance regulator (1485 aa).

The Cytoplasmic portion of the chain corresponds to 1-78; it reads MQRSPVEDAN…SLLRAMARCY (78 aa). Residues 79–99 form a helical membrane-spanning segment; the sequence is IKPFLLFGFLLYIGEATKTVQ. Residues 83–353 enclose the ABC transmembrane type-1 1 domain; the sequence is LLFGFLLYIG…CMVLRMTVTR (271 aa). Topologically, residues 100-123 are extracellular; the sequence is PQLLGRIIASFDPAHEPERANGYF. The helical transmembrane segment at 124–149 threads the bilayer; that stretch reads LAFGLGLLFTARFLLLQPAMFGLHHL. Residues 150–195 are Cytoplasmic-facing; the sequence is GMQIRIALFSIIYKKTLKLSSRVLDKISTGQLVSLMSANLGKFDQS. The chain crosses the membrane as a helical span at residues 196-216; sequence LGMAHFIWISPLQCILCTGLI. At 217-224 the chain is on the extracellular side; the sequence is WELIDVNS. The chain crosses the membrane as a helical span at residues 225 to 245; it reads FCALAAISLLGVLQAFLSHKM. Residues 246–299 are Cytoplasmic-facing; the sequence is GPYKAQKVLLTNKRLALTSEIMENLHSVKAYGWEEIMETLIKNIRQDEVKLTRK. The chain crosses the membrane as a helical span at residues 300 to 320; it reads IGSLRYFYSSAYFFSAIFVIV. The Extracellular segment spans residues 321–340; the sequence is AAVVPHALSRGINLRRIFTT. Residues 341–363 form a helical membrane-spanning segment; sequence LSYCMVLRMTVTRQLPGSIQMWY. The Cytoplasmic segment spans residues 364–856; sequence DTMRLIWKIE…YVRYVSNNKS (493 aa). ATP contacts are provided by residues Trp-402, 457–464, and Gln-492; that span reads GSMGSGKS. Residues 424-645 form the ABC transporter 1 domain; the sequence is NGDAGLFFTN…RPDFSSLLLG (222 aa). The segment at 653 to 826 is disordered R region; it reads SAERRCSILT…GILEEENIEA (174 aa). A helical membrane pass occupies residues 857-877; it reads LLYVLIFILFIAAIEIAGSVA. Residues 860–1163 form the ABC transmembrane type-1 2 domain; it reads VLIFILFIAA…CVATSIAVDG (304 aa). Topologically, residues 878 to 924 are extracellular; it reads GIFLITDELWREEHQRSEPNMTKHSNASSSGQTYAITVTPTSSYYIL. Residues Asn-897 and Asn-903 are each glycosylated (N-linked (GlcNAc...) asparagine). A discontinuously helical membrane pass occupies residues 925–946; the sequence is YIYVATSESLLAMGFFRGLPFV. Residues 947–996 are Cytoplasmic-facing; it reads HTTITISKKLHQKMLHAVLSAPMSVLNTMKTGRIMNRFTKDMATIDDMLP. The helical transmembrane segment at 997–1019 threads the bilayer; the sequence is LLMFDFVQLTVVVVGCILVVSIV. The Extracellular portion of the chain corresponds to 1020–1021; it reads RP. Residues 1022–1042 form a helical membrane-spanning segment; it reads YIFLAATPLAIIFIVMRKYFL. Residues 1043–1103 are Cytoplasmic-facing; sequence RTGQQLKQLE…TATWFLYLST (61 aa). The helical transmembrane segment at 1104 to 1124 threads the bilayer; sequence LRWFLFRADILFVFFFTLAAW. At 1125 to 1138 the chain is on the extracellular side; sequence IAVGTNQDKPGEIG. The chain crosses the membrane as a helical span at residues 1139 to 1159; that stretch reads IIICLAMLILGTFQWCVATSI. Residues 1160–1485 are Cytoplasmic-facing; sequence AVDGMMRSVD…AEDNIQDTRL (326 aa). The region spanning 1211-1444 is the ABC transporter 2 domain; the sequence is IEVRNLTVKY…TSHLKQAISP (234 aa). ATP-binding positions include Tyr-1220 and 1245–1252; that span reads GRTGSGKS. Residues 1452 to 1485 form a disordered region; it reads PRRNSSMRTPQSKLSSVTQTLQEEAEDNIQDTRL. Positions 1454-1473 are enriched in polar residues; it reads RNSSMRTPQSKLSSVTQTLQ. A compositionally biased stretch (acidic residues) spans 1474–1485; sequence EEAEDNIQDTRL. The short motif at 1483–1485 is the PDZ-binding element; that stretch reads TRL.

It belongs to the ABC transporter superfamily. ABCC family. CFTR transporter (TC 3.A.1.202) subfamily. In terms of assembly, monomer; does not require oligomerization for channel activity. Interacts with cse1l; this interaction may down-regulate cftr activity. Phosphorylated; this activates the channel. Dephosphorylation strongly decreases ATPase activity. Phosphorylation at PKA sites activates the channel. Phosphorylation at PKC sites enhances the response to phosphorylation by PKA. In terms of tissue distribution, detected in gut epithelium (at protein level). Detected in kidney, spleen, intestine and liver. Detected in pancreatic duct epithelium at 5 dpf and throughout adult life.

The protein resides in the apical cell membrane. It localises to the early endosome membrane. Its subcellular location is the cell membrane. It is found in the recycling endosome membrane. The protein localises to the endoplasmic reticulum membrane. The catalysed reaction is ATP + H2O + closed Cl(-) channel = ADP + phosphate + open Cl(-) channel.. It catalyses the reaction chloride(in) = chloride(out). It carries out the reaction hydrogencarbonate(in) = hydrogencarbonate(out). The enzyme catalyses ATP + H2O = ADP + phosphate + H(+). In terms of biological role, epithelial ion channel that plays an important role in the regulation of epithelial ion and water transport and fluid homeostasis. Mediates the transport of chloride ions across the cell membrane. Possesses an intrinsic ATPase activity and utilizes ATP to gate its channel; the passive flow of anions through the channel is gated by cycles of ATP binding and hydrolysis by the ATP-binding domains. The ion channel is also permeable to HCO(3)(-); selectivity depends on the extracellular chloride concentration. Exerts its function also by modulating the activity of other ion channels and transporters. Contributes to the regulation of the pH and the ion content of the epithelial fluid layer. Required for normal fluid homeostasis in the gut. Required for normal volume expansion and cell shape changes of Kupffer's vesicle during embryonic development and for normal establishment of left-right body patterning. Required for normal resistance to infection by P.aeruginosa strain PA14 and strain SMC573. The protein is Cystic fibrosis transmembrane conductance regulator of Danio rerio (Zebrafish).